Here is a 395-residue protein sequence, read N- to C-terminus: 1-deoxy-D-xylulose 5-phosphate reductoisomerase (395 aa).

Thr-10, Gly-11, Ser-12, Ile-13, and Asn-123 together coordinate NADPH. Lys-124 contributes to the 1-deoxy-D-xylulose 5-phosphate binding site. Glu-125 serves as a coordination point for NADPH. Asp-149 serves as a coordination point for Mn(2+). 1-deoxy-D-xylulose 5-phosphate contacts are provided by Ser-150, Glu-151, Ser-185, and His-208. Residue Glu-151 participates in Mn(2+) binding. Position 214 (Gly-214) interacts with NADPH. Ser-221, Asn-226, Lys-227, and Glu-230 together coordinate 1-deoxy-D-xylulose 5-phosphate. Glu-230 is a binding site for Mn(2+).

The protein belongs to the DXR family. Mg(2+) serves as cofactor. Mn(2+) is required as a cofactor.

The catalysed reaction is 2-C-methyl-D-erythritol 4-phosphate + NADP(+) = 1-deoxy-D-xylulose 5-phosphate + NADPH + H(+). The protein operates within isoprenoid biosynthesis; isopentenyl diphosphate biosynthesis via DXP pathway; isopentenyl diphosphate from 1-deoxy-D-xylulose 5-phosphate: step 1/6. Functionally, catalyzes the NADPH-dependent rearrangement and reduction of 1-deoxy-D-xylulose-5-phosphate (DXP) to 2-C-methyl-D-erythritol 4-phosphate (MEP). This chain is 1-deoxy-D-xylulose 5-phosphate reductoisomerase, found in Shewanella sediminis (strain HAW-EB3).